The primary structure comprises 195 residues: Imidazoleglycerol-phosphate dehydratase (195 aa).

This sequence belongs to the imidazoleglycerol-phosphate dehydratase family.

The protein resides in the cytoplasm. It catalyses the reaction D-erythro-1-(imidazol-4-yl)glycerol 3-phosphate = 3-(imidazol-4-yl)-2-oxopropyl phosphate + H2O. It functions in the pathway amino-acid biosynthesis; L-histidine biosynthesis; L-histidine from 5-phospho-alpha-D-ribose 1-diphosphate: step 6/9. This chain is Imidazoleglycerol-phosphate dehydratase, found in Frankia casuarinae (strain DSM 45818 / CECT 9043 / HFP020203 / CcI3).